The chain runs to 330 residues: Ribose-phosphate pyrophosphokinase (330 aa).

An ATP-binding site is contributed by 55 to 57; it reads DGE. The Mg(2+) site is built by H148 and D187. K211 is a catalytic residue. Residues R213, D237, and 241-245 contribute to the D-ribose 5-phosphate site; that span reads DTGGT.

This sequence belongs to the ribose-phosphate pyrophosphokinase family. Class I subfamily. Homohexamer. Requires Mg(2+) as cofactor.

The protein resides in the cytoplasm. The enzyme catalyses D-ribose 5-phosphate + ATP = 5-phospho-alpha-D-ribose 1-diphosphate + AMP + H(+). The protein operates within metabolic intermediate biosynthesis; 5-phospho-alpha-D-ribose 1-diphosphate biosynthesis; 5-phospho-alpha-D-ribose 1-diphosphate from D-ribose 5-phosphate (route I): step 1/1. Its function is as follows. Involved in the biosynthesis of the central metabolite phospho-alpha-D-ribosyl-1-pyrophosphate (PRPP) via the transfer of pyrophosphoryl group from ATP to 1-hydroxyl of ribose-5-phosphate (Rib-5-P). The chain is Ribose-phosphate pyrophosphokinase from Nostoc sp. (strain PCC 7120 / SAG 25.82 / UTEX 2576).